The primary structure comprises 149 residues: uncharacterized protein (149 aa).

Residues 111-140 are a coiled coil; that stretch reads HKALEKATELIENEEELLKREGIKRENLKF.

This is an uncharacterized protein from Aquifex aeolicus (strain VF5).